The following is a 267-amino-acid chain: L-aspartate dehydrogenase (267 aa).

NAD(+) is bound by residues Ala124 and Asn190. His220 is a catalytic residue.

The protein belongs to the L-aspartate dehydrogenase family.

The catalysed reaction is L-aspartate + NADP(+) + H2O = oxaloacetate + NH4(+) + NADPH + H(+). It catalyses the reaction L-aspartate + NAD(+) + H2O = oxaloacetate + NH4(+) + NADH + H(+). It participates in cofactor biosynthesis; NAD(+) biosynthesis; iminoaspartate from L-aspartate (dehydrogenase route): step 1/1. In terms of biological role, specifically catalyzes the NAD or NADP-dependent dehydrogenation of L-aspartate to iminoaspartate. This Pseudomonas aeruginosa (strain ATCC 15692 / DSM 22644 / CIP 104116 / JCM 14847 / LMG 12228 / 1C / PRS 101 / PAO1) protein is L-aspartate dehydrogenase.